A 246-amino-acid chain; its full sequence is Electron transfer flavoprotein beta subunit lysine methyltransferase (246 aa).

The protein belongs to the methyltransferase superfamily. ETFBKMT family.

It is found in the cytoplasm. The protein localises to the mitochondrion matrix. The catalysed reaction is L-lysyl-[protein] + 3 S-adenosyl-L-methionine = N(6),N(6),N(6)-trimethyl-L-lysyl-[protein] + 3 S-adenosyl-L-homocysteine + 3 H(+). Its function is as follows. Protein-lysine methyltransferase that selectively trimethylates the flavoprotein ETFB in mitochondria. Thereby, may negatively regulate the function of ETFB in electron transfer from Acyl-CoA dehydrogenases to the main respiratory chain. The polypeptide is Electron transfer flavoprotein beta subunit lysine methyltransferase (etfbkmt) (Xenopus laevis (African clawed frog)).